A 343-amino-acid polypeptide reads, in one-letter code: 4-hydroxy-3-methylbut-2-enyl diphosphate reductase (343 aa).

Residue cysteine 18 coordinates [4Fe-4S] cluster. Residues histidine 47 and histidine 83 each contribute to the (2E)-4-hydroxy-3-methylbut-2-enyl diphosphate site. Dimethylallyl diphosphate-binding residues include histidine 47 and histidine 83. Residues histidine 47 and histidine 83 each contribute to the isopentenyl diphosphate site. Residue cysteine 105 coordinates [4Fe-4S] cluster. (2E)-4-hydroxy-3-methylbut-2-enyl diphosphate is bound at residue histidine 133. Histidine 133 provides a ligand contact to dimethylallyl diphosphate. Histidine 133 is a binding site for isopentenyl diphosphate. Glutamate 135 (proton donor) is an active-site residue. Residue threonine 174 coordinates (2E)-4-hydroxy-3-methylbut-2-enyl diphosphate. Cysteine 204 contacts [4Fe-4S] cluster. Positions 232, 233, 234, and 277 each coordinate (2E)-4-hydroxy-3-methylbut-2-enyl diphosphate. Serine 232, serine 233, asparagine 234, and serine 277 together coordinate dimethylallyl diphosphate. Positions 232, 233, 234, and 277 each coordinate isopentenyl diphosphate.

This sequence belongs to the IspH family. It depends on [4Fe-4S] cluster as a cofactor.

It carries out the reaction isopentenyl diphosphate + 2 oxidized [2Fe-2S]-[ferredoxin] + H2O = (2E)-4-hydroxy-3-methylbut-2-enyl diphosphate + 2 reduced [2Fe-2S]-[ferredoxin] + 2 H(+). It catalyses the reaction dimethylallyl diphosphate + 2 oxidized [2Fe-2S]-[ferredoxin] + H2O = (2E)-4-hydroxy-3-methylbut-2-enyl diphosphate + 2 reduced [2Fe-2S]-[ferredoxin] + 2 H(+). It functions in the pathway isoprenoid biosynthesis; dimethylallyl diphosphate biosynthesis; dimethylallyl diphosphate from (2E)-4-hydroxy-3-methylbutenyl diphosphate: step 1/1. The protein operates within isoprenoid biosynthesis; isopentenyl diphosphate biosynthesis via DXP pathway; isopentenyl diphosphate from 1-deoxy-D-xylulose 5-phosphate: step 6/6. Its function is as follows. Catalyzes the conversion of 1-hydroxy-2-methyl-2-(E)-butenyl 4-diphosphate (HMBPP) into a mixture of isopentenyl diphosphate (IPP) and dimethylallyl diphosphate (DMAPP). Acts in the terminal step of the DOXP/MEP pathway for isoprenoid precursor biosynthesis. This chain is 4-hydroxy-3-methylbut-2-enyl diphosphate reductase, found in Bartonella henselae (strain ATCC 49882 / DSM 28221 / CCUG 30454 / Houston 1) (Rochalimaea henselae).